We begin with the raw amino-acid sequence, 175 residues long: MLYGDRSIENTDGTIRSLSNRHVQMIAIGGTIGTGLFLGAGTTISATGPSVIFIYAIMGLFFFFLLRALGEMFYFDSNSHTFVSFITRYLGEAAGRFAGWTYWIGILFACMAELTAVSTYVQYWLPGLPAWLIEVSVLGLLTLLNLTAAKLFGETEFWFAMIKIIAIISLVVTGI.

Helical transmembrane passes span 25–45 (MIAI…TTIS), 46–66 (ATGP…FFLL), 97–117 (FAGW…LTAV), 124–144 (WLPG…LTLL), and 155–175 (TEFW…VTGI).

Belongs to the amino acid-polyamine-organocation (APC) superfamily.

Its subcellular location is the cell membrane. This is an uncharacterized protein from Lactobacillus delbrueckii subsp. lactis.